A 512-amino-acid chain; its full sequence is Sucrose transport protein SUC2 (512 aa).

The Cytoplasmic segment spans residues M1–K31. A helical transmembrane segment spans residues I32–L52. Residues L53–K65 lie on the Extracellular side of the membrane. The helical transmembrane segment at W66–G86 threads the bilayer. Over Y87 to R100 the chain is Cytoplasmic. A helical membrane pass occupies residues P101–A121. Topologically, residues D122 to R138 are extracellular. The helical transmembrane segment at A139–G159 threads the bilayer. Residues P160–R177 lie on the Cytoplasmic side of the membrane. A helical membrane pass occupies residues T178 to G198. The Extracellular portion of the chain corresponds to S199 to K223. Residues T224 to V244 form a helical membrane-spanning segment. Residues K245–P278 lie on the Cytoplasmic side of the membrane. The helical transmembrane segment at M279–F299 threads the bilayer. Over D300–G332 the chain is Extracellular. The helical transmembrane segment at A333–I353 threads the bilayer. At G354–R362 the chain is on the cytoplasmic side. Residues L363 to K383 traverse the membrane as a helical segment. Topologically, residues Q384–A407 are extracellular. N-linked (GlcNAc...) asparagine glycosylation occurs at N402. A helical membrane pass occupies residues L408–L428. Topologically, residues A429–Q440 are cytoplasmic. The chain crosses the membrane as a helical span at residues G441–G461. The Extracellular portion of the chain corresponds to G462 to N473. Residues I474–V494 traverse the membrane as a helical segment. The Cytoplasmic portion of the chain corresponds to L495–H512.

Belongs to the glycoside-pentoside-hexuronide (GPH) cation symporter transporter (TC 2.A.2.4) family. In terms of assembly, homodimer. Interacts with SUC3 and SUC4. Expressed in leaves and, to a lower extent, in roots, flowers and stems. Highly specific to the phloem, exclusively localized in companion cells (at protein level).

It is found in the cell membrane. The catalysed reaction is sucrose(out) + H(+)(out) = sucrose(in) + H(+)(in). Its pathway is glycan biosynthesis; sucrose metabolism. With respect to regulation, inhibited by protonophores (e.g. dinitrophenol and carbonyl cyanide m-chlorophenyl-hydrazone (CCCP)) and SH group inhibitors (e.g. N-ethylmaleimide (NEM) and p-chloromercuriphenyl sulphonic acid (PCMPS)). Functionally, responsible for the transport of sucrose into the cell, with the concomitant uptake of protons (symport system). Can also transport other glucosides such as maltose, arbutin (hydroquinone-beta-D-glucoside), salicin (2-(hydroxymethyl)phenyl-beta-D-glucoside), alpha-phenylglucoside, beta-phenylglucoside, alpha-paranitrophenylglucoside, beta-paranitrophenylglucoside, and paranitrophenyl-beta-thioglucoside. May also transport biotin. Required for apoplastic phloem sucrose loading in source tissues (e.g. leaves) in order to transport it to sink tissues (e.g. roots, flowers). In Arabidopsis thaliana (Mouse-ear cress), this protein is Sucrose transport protein SUC2.